Consider the following 308-residue polypeptide: Oxygen-dependent coproporphyrinogen-III oxidase (308 aa).

Ser-100 contacts substrate. His-104 and His-114 together coordinate a divalent metal cation. His-114 functions as the Proton donor in the catalytic mechanism. Position 116–118 (116–118) interacts with substrate; that stretch reads NFR. Residues His-153 and His-183 each coordinate a divalent metal cation. The segment at 248-283 is important for dimerization; the sequence is YVEFNLVFDRGTIFGLQSGGRTESILSSMPPIATWK. A substrate-binding site is contributed by 266–268; sequence GGR.

It belongs to the aerobic coproporphyrinogen-III oxidase family. As to quaternary structure, homodimer. A divalent metal cation serves as cofactor.

Its subcellular location is the cytoplasm. It carries out the reaction coproporphyrinogen III + O2 + 2 H(+) = protoporphyrinogen IX + 2 CO2 + 2 H2O. It participates in porphyrin-containing compound metabolism; protoporphyrin-IX biosynthesis; protoporphyrinogen-IX from coproporphyrinogen-III (O2 route): step 1/1. Its function is as follows. Involved in the heme biosynthesis. Catalyzes the aerobic oxidative decarboxylation of propionate groups of rings A and B of coproporphyrinogen-III to yield the vinyl groups in protoporphyrinogen-IX. The chain is Oxygen-dependent coproporphyrinogen-III oxidase from Francisella tularensis subsp. tularensis (strain FSC 198).